A 360-amino-acid polypeptide reads, in one-letter code: Histidinol-phosphate aminotransferase (360 aa).

The residue at position 211 (lysine 211) is an N6-(pyridoxal phosphate)lysine.

This sequence belongs to the class-II pyridoxal-phosphate-dependent aminotransferase family. Histidinol-phosphate aminotransferase subfamily. Homodimer. It depends on pyridoxal 5'-phosphate as a cofactor.

The enzyme catalyses L-histidinol phosphate + 2-oxoglutarate = 3-(imidazol-4-yl)-2-oxopropyl phosphate + L-glutamate. It functions in the pathway amino-acid biosynthesis; L-histidine biosynthesis; L-histidine from 5-phospho-alpha-D-ribose 1-diphosphate: step 7/9. This Sodalis glossinidius (strain morsitans) protein is Histidinol-phosphate aminotransferase.